The chain runs to 137 residues: MGVTVDLEVVTPEKLILSETVQLVTVPGSEGYFGVLSGHVPMISSLRSGVVRMGQGDDAVHLAVSKGFAEVRPDRVTLLVDRAVFGKKVDAAAVTKIRDAAQDELDGTPTESEEYETLRDKLDFANAQLAALEGELV.

It belongs to the ATPase epsilon chain family. In terms of assembly, F-type ATPases have 2 components, CF(1) - the catalytic core - and CF(0) - the membrane proton channel. CF(1) has five subunits: alpha(3), beta(3), gamma(1), delta(1), epsilon(1). CF(0) has three main subunits: a, b and c.

It localises to the cell inner membrane. Functionally, produces ATP from ADP in the presence of a proton gradient across the membrane. This is ATP synthase epsilon chain from Magnetococcus marinus (strain ATCC BAA-1437 / JCM 17883 / MC-1).